We begin with the raw amino-acid sequence, 169 residues long: tRNA (cytidine(56)-2'-O)-methyltransferase (169 aa).

Residues Leu-77, 103 to 107 (GSEKV), and 121 to 128 (IGNQPHSE) each bind S-adenosyl-L-methionine.

Belongs to the aTrm56 family. In terms of assembly, homodimer.

It localises to the cytoplasm. The catalysed reaction is cytidine(56) in tRNA + S-adenosyl-L-methionine = 2'-O-methylcytidine(56) in tRNA + S-adenosyl-L-homocysteine + H(+). Specifically catalyzes the AdoMet-dependent 2'-O-ribose methylation of cytidine at position 56 in tRNAs. This Sulfurisphaera tokodaii (strain DSM 16993 / JCM 10545 / NBRC 100140 / 7) (Sulfolobus tokodaii) protein is tRNA (cytidine(56)-2'-O)-methyltransferase.